Reading from the N-terminus, the 319-residue chain is FLLRVSPDLEWHVACLKCAECGQPLDETCTCFLRDGKAYCKRDYGRLFGIKCAQCRAAFSSSDLVMRARDHVYHLECFRCAACGRQLLPGDQFCLRERDLLCRADHGPPPDGAAARGPRSPAPPPAHLAEPVPGRPPGPRPQSHKAAEKTTRVRTVLNEKQLHTLRTCYAANPRPDALMKEQLVEMTGLSPRVIRVWFQNKRCKDKKKSILMKQLQQQQHSDKTSLQGLTGTPLVAGSPVRHESAVQGSAVEVQTYQPPWKALSDFALQSDLEPPAAFQQLVSFSESGSLGTSSGSDVTSLSSQLPDTPNSMVPSPAET.

LIM zinc-binding domains are found at residues 1–43 (FLLR…CKRD) and 52–106 (CAQC…RADH). Disordered stretches follow at residues 106–151 (HGPP…EKTT), 218–237 (QQHS…LVAG), and 286–319 (ESGS…PAET). A DNA-binding region (homeobox) is located at residues 150–209 (TTRVRTVLNEKQLHTLRTCYAANPRPDALMKEQLVEMTGLSPRVIRVWFQNKRCKDKKKS). Positions 218 to 230 (QQHSDKTSLQGLT) are enriched in polar residues. The span at 286–303 (ESGSLGTSSGSDVTSLSS) shows a compositional bias: low complexity. Positions 304 to 319 (QLPDTPNSMVPSPAET) are enriched in polar residues.

The protein resides in the nucleus. Transcriptional factor that defines subclasses of motoneurons that segregate into columns in the spinal cord and select distinct axon pathways. Acts in conjunction with LIM-1, LIM-3 and ISL-1. This Gallus gallus (Chicken) protein is Insulin gene enhancer protein ISL-2 (ISL2).